The sequence spans 195 residues: Holliday junction branch migration complex subunit RuvA (195 aa).

The interval 1–64 (MIASIRGVIQ…EDALTLYGFS (64 aa)) is domain I. Residues 65–139 (DNAQRSLFEQ…GKIDFRQLAA (75 aa)) are domain II. Positions 139–143 (ASGST) are flexible linker. Residues 144-195 (SVSALDRELSEILVSLGYSAAEAAAAIASLPSDAPPTLEERLRLALRYFGSA) are domain III.

The protein belongs to the RuvA family. In terms of assembly, homotetramer. Forms an RuvA(8)-RuvB(12)-Holliday junction (HJ) complex. HJ DNA is sandwiched between 2 RuvA tetramers; dsDNA enters through RuvA and exits via RuvB. An RuvB hexamer assembles on each DNA strand where it exits the tetramer. Each RuvB hexamer is contacted by two RuvA subunits (via domain III) on 2 adjacent RuvB subunits; this complex drives branch migration. In the full resolvosome a probable DNA-RuvA(4)-RuvB(12)-RuvC(2) complex forms which resolves the HJ.

It is found in the cytoplasm. The RuvA-RuvB-RuvC complex processes Holliday junction (HJ) DNA during genetic recombination and DNA repair, while the RuvA-RuvB complex plays an important role in the rescue of blocked DNA replication forks via replication fork reversal (RFR). RuvA specifically binds to HJ cruciform DNA, conferring on it an open structure. The RuvB hexamer acts as an ATP-dependent pump, pulling dsDNA into and through the RuvAB complex. HJ branch migration allows RuvC to scan DNA until it finds its consensus sequence, where it cleaves and resolves the cruciform DNA. The polypeptide is Holliday junction branch migration complex subunit RuvA (Chloroflexus aggregans (strain MD-66 / DSM 9485)).